The sequence spans 345 residues: Anthranilate phosphoribosyltransferase (345 aa).

5-phospho-alpha-D-ribose 1-diphosphate contacts are provided by residues G88, 91-92 (GD), T96, 98-101 (NIST), 116-124 (KHGNRSASG), and S128. G88 is a binding site for anthranilate. Residue S100 participates in Mg(2+) binding. N119 contacts anthranilate. R174 contributes to the anthranilate binding site. Mg(2+)-binding residues include D233 and E234.

Belongs to the anthranilate phosphoribosyltransferase family. As to quaternary structure, homodimer. Requires Mg(2+) as cofactor.

It carries out the reaction N-(5-phospho-beta-D-ribosyl)anthranilate + diphosphate = 5-phospho-alpha-D-ribose 1-diphosphate + anthranilate. The protein operates within amino-acid biosynthesis; L-tryptophan biosynthesis; L-tryptophan from chorismate: step 2/5. Catalyzes the transfer of the phosphoribosyl group of 5-phosphorylribose-1-pyrophosphate (PRPP) to anthranilate to yield N-(5'-phosphoribosyl)-anthranilate (PRA). This chain is Anthranilate phosphoribosyltransferase, found in Prochlorococcus marinus (strain NATL2A).